Reading from the N-terminus, the 130-residue chain is T-cell receptor alpha chain V region PHDS58 (130 aa).

Residues 1–20 (MLLALLPVLGIHFVLRDAQA) form the signal peptide. Positions 21 to 114 (QSVTQPDARV…SAVYFCAVSG (94 aa)) are v segment. N-linked (GlcNAc...) asparagine glycosylation occurs at Asn90. The tract at residues 115 to 130 (FASALTFGSGTKVIVL) is j segment.

The polypeptide is T-cell receptor alpha chain V region PHDS58 (Mus musculus (Mouse)).